Here is a 231-residue protein sequence, read N- to C-terminus: Large ribosomal subunit protein uL1 (231 aa).

This sequence belongs to the universal ribosomal protein uL1 family. Part of the 50S ribosomal subunit.

In terms of biological role, binds directly to 23S rRNA. The L1 stalk is quite mobile in the ribosome, and is involved in E site tRNA release. Protein L1 is also a translational repressor protein, it controls the translation of the L11 operon by binding to its mRNA. The protein is Large ribosomal subunit protein uL1 of Teredinibacter turnerae (strain ATCC 39867 / T7901).